The chain runs to 941 residues: Protein BREAST CANCER SUSCEPTIBILITY 1 homolog (941 aa).

The RING-type zinc-finger motif lies at 16 to 54; that stretch reads CPICLSLYNSAVSLSCNHVFCNACIVKSMKMDATCPVCK. Disordered regions lie at residues 87-282 and 303-528; these read FVSQ…ILPS and KVKV…GKDD. Basic and acidic residues-rich tracts occupy residues 96 to 115 and 125 to 136; these read SDKE…DKNR and KRNEYGKTKEID. Over residues 157–173 the composition is skewed to polar residues; sequence LLQNLSAESLTKPTESV. The segment covering 175–196 has biased composition (basic and acidic residues); the sequence is TAEKPKDYTENTVIRLDEHPSL. Residues 216-236 show a composition bias toward polar residues; that stretch reads NSSQRTESDQLLGTTPVNVPS. The segment covering 242-255 has biased composition (basic and acidic residues); that stretch reads DSDHESPSKEDEQQ. Residues 298-305 carry the Nuclear localization signal 1 motif; the sequence is QKKLPKVK. Polar residues-rich tracts occupy residues 329–357 and 376–391; these read GVSQ…SGTI and SKAQ…NVSN. Basic and acidic residues-rich tracts occupy residues 428–453 and 477–487; these read GKGD…EKPS and KTSEKKLKLDS. The short motif at 444-451 is the Nuclear localization signal 2 element; that stretch reads EKRSPTEK. Residues 489 to 498 show a composition bias toward polar residues; it reads MISSKATQPH. The span at 512–528 shows a compositional bias: basic and acidic residues; it reads DKQDSRNNRKSTVGKDD. The C2HC pre-PHD-type zinc-finger motif lies at 561 to 612; sequence KFTCAFCQCSEDTEASGEMTHYYRGEPVSADFNGGSKVIHVHKNCAEWAPNV. Residues 632–681 form a PHD-type; degenerate zinc finger; sequence ISCSCCGLKGAALGCYNKSCKNSFHVTCAKLIPECRWDNVKFVMLCPLDA. BRCT domains lie at 724–819 and 840–941; these read KQFH…PYEI and KKPK…LVLI.

Forms heterodimer with BARD1/ROW1. In terms of tissue distribution, expressed ubiquitously with highest levels in flower buds. Mostly expressed in flowers and siliques, and, to a lower extent, in roots, rosette leaves, inflorescence and young cauline leaves.

It is found in the nucleus. Functionally, plays a role in DNA repair and in cell-cycle control. Required for the repair of DNA double-strand breaks (DSBs), both natural and induced by genotoxic stress, by homologous recombination (HR). This is Protein BREAST CANCER SUSCEPTIBILITY 1 homolog from Arabidopsis thaliana (Mouse-ear cress).